Reading from the N-terminus, the 133-residue chain is Probable non-specific lipid-transfer protein 2 (133 aa).

The first 31 residues, 1 to 31 (MRTVSMAALVVIAAALAWTSSAELASAPAPG), serve as a signal peptide directing secretion. Disulfide bonds link cysteine 35/cysteine 83, cysteine 45/cysteine 60, cysteine 61/cysteine 106, and cysteine 81/cysteine 121.

The protein belongs to the plant LTP family.

Functionally, plant non-specific lipid-transfer proteins transfer phospholipids as well as galactolipids across membranes. May play a role in wax or cutin deposition in the cell walls of expanding epidermal cells and certain secretory tissues. This is Probable non-specific lipid-transfer protein 2 from Parietaria judaica (Pellitory-of-the-wall).